The chain runs to 339 residues: Heme A synthase (339 aa).

The next 8 helical transmembrane spans lie at 7 to 27 (VIIW…VGGI), 92 to 112 (HRFI…YFLI), 126 to 146 (ILLG…KSGL), 159 to 179 (LHLT…LDLI), 199 to 219 (AIII…AGLI), 254 to 274 (VQFV…FLTF), 291 to 311 (ALLI…LYSV), and 312 to 332 (PLWL…TTTY). Histidine 258 is a binding site for heme. Histidine 319 is a heme binding site.

Belongs to the COX15/CtaA family. Type 2 subfamily. Interacts with CtaB. Heme b serves as cofactor.

The protein localises to the cell membrane. It catalyses the reaction Fe(II)-heme o + 2 A + H2O = Fe(II)-heme a + 2 AH2. The protein operates within porphyrin-containing compound metabolism; heme A biosynthesis; heme A from heme O: step 1/1. Functionally, catalyzes the conversion of heme O to heme A by two successive hydroxylations of the methyl group at C8. The first hydroxylation forms heme I, the second hydroxylation results in an unstable dihydroxymethyl group, which spontaneously dehydrates, resulting in the formyl group of heme A. This is Heme A synthase from Flavobacterium psychrophilum (strain ATCC 49511 / DSM 21280 / CIP 103535 / JIP02/86).